The chain runs to 126 residues: Large ribosomal subunit protein uL22 (126 aa).

This sequence belongs to the universal ribosomal protein uL22 family. Part of the 50S ribosomal subunit.

This protein binds specifically to 23S rRNA; its binding is stimulated by other ribosomal proteins, e.g. L4, L17, and L20. It is important during the early stages of 50S assembly. It makes multiple contacts with different domains of the 23S rRNA in the assembled 50S subunit and ribosome. In terms of biological role, the globular domain of the protein is located near the polypeptide exit tunnel on the outside of the subunit, while an extended beta-hairpin is found that lines the wall of the exit tunnel in the center of the 70S ribosome. The polypeptide is Large ribosomal subunit protein uL22 (Ruegeria sp. (strain TM1040) (Silicibacter sp.)).